The sequence spans 177 residues: Small ribosomal subunit protein uS5 (177 aa).

Positions 14–77 (LQEKLITVNR…EKARHNMIDI (64 aa)) constitute an S5 DRBM domain.

This sequence belongs to the universal ribosomal protein uS5 family. Part of the 30S ribosomal subunit. Contacts proteins S4 and S8.

Functionally, with S4 and S12 plays an important role in translational accuracy. In terms of biological role, located at the back of the 30S subunit body where it stabilizes the conformation of the head with respect to the body. This Blochmanniella floridana protein is Small ribosomal subunit protein uS5.